Consider the following 473-residue polypeptide: Serine palmitoyltransferase 1 (473 aa).

Residues 1–15 (MATATEQWVLVEMVQ) lie on the Lumenal side of the membrane. Residues 1–66 (MATATEQWVL…KEELIEEWQP (66 aa)) are interaction with SPTLC2. Residues 16–36 (ALYEAPAYHLILEGILILWII) traverse the membrane as a helical segment. At 37–473 (RLLFSKTYKL…IKEVAQAVLL (437 aa)) the chain is on the cytoplasmic side. A Phosphotyrosine; by ABL modification is found at Y164.

It belongs to the class-II pyridoxal-phosphate-dependent aminotransferase family. As to quaternary structure, component of the serine palmitoyltransferase (SPT) complex, which is also composed of SPTLC2 or SPTLC3 and SPTSSA or SPTSSB. The heterodimer with SPTLC2 or SPTLC3 forms the catalytic core of the enzyme, while SPTSSA or SPTSSB subunits determine substrate specificity. SPT also interacts with ORMDL proteins, especially ORMDL3, which negatively regulate SPT activity in the presence of ceramides. Forms dimers of heterodimers with SPTLC2. Interacts with RTN4. It depends on pyridoxal 5'-phosphate as a cofactor. In terms of processing, phosphorylation at Tyr-164 inhibits activity and promotes cell survival.

The protein resides in the endoplasmic reticulum membrane. It catalyses the reaction L-serine + hexadecanoyl-CoA + H(+) = 3-oxosphinganine + CO2 + CoA. The enzyme catalyses octadecanoyl-CoA + L-serine + H(+) = 3-oxoeicosasphinganine + CO2 + CoA. The catalysed reaction is tetradecanoyl-CoA + L-serine + H(+) = 3-oxohexadecasphinganine + CO2 + CoA. It carries out the reaction dodecanoyl-CoA + L-serine + H(+) = 3-oxotetradecasphinganine + CO2 + CoA. The protein operates within lipid metabolism; sphingolipid metabolism. SPT complex catalytic activity is negatively regulated by ORMDL proteins, including ORMDL3, in the presence of ceramides. This mechanism allows to maintain ceramide levels at sufficient concentrations for the production of complex sphingolipids, but which prevents the accumulation of ceramides to levels that trigger apoptosis. Its function is as follows. Component of the serine palmitoyltransferase multisubunit enzyme (SPT) that catalyzes the initial and rate-limiting step in sphingolipid biosynthesis by condensing L-serine and activated acyl-CoA (most commonly palmitoyl-CoA) to form long-chain bases. The SPT complex is also composed of SPTLC2 or SPTLC3 and SPTSSA or SPTSSB. Within this complex, the heterodimer with SPTLC2 or SPTLC3 forms the catalytic core. The composition of the serine palmitoyltransferase (SPT) complex determines the substrate preference. The SPTLC1-SPTLC2-SPTSSA complex shows a strong preference for C16-CoA substrate, while the SPTLC1-SPTLC3-SPTSSA isozyme uses both C14-CoA and C16-CoA as substrates, with a slight preference for C14-CoA. The SPTLC1-SPTLC2-SPTSSB complex shows a strong preference for C18-CoA substrate, while the SPTLC1-SPTLC3-SPTSSB isozyme displays an ability to use a broader range of acyl-CoAs, without apparent preference. Required for adipocyte cell viability and metabolic homeostasis. This chain is Serine palmitoyltransferase 1 (SPTLC1), found in Macaca fascicularis (Crab-eating macaque).